The primary structure comprises 51 residues: Large ribosomal subunit protein bL33 (51 aa).

The protein belongs to the bacterial ribosomal protein bL33 family.

The protein is Large ribosomal subunit protein bL33 of Psychrobacter arcticus (strain DSM 17307 / VKM B-2377 / 273-4).